Here is a 574-residue protein sequence, read N- to C-terminus: MSEAEPSVVVAEQCRRSACDRCRGQKLRCERPVSNSSTTPCRRCLKAHVRCVTTAQPHRTKPLSSLQYLHHTESNYDPHSATVAGQLPVAAVAGLGDLDPSLLHMTGVQNPRRLSHSSSMANPVDSRPPGRTRRLSNPDHFLPHPPLHPNGVLDTDGTPLLDSIDHLPDMTASRGFGFSAALTPHSPSGSSDFFDYFRPMAEDNNRSPWMDAFTNLPPDHREGTPAGSNYRGSLTGENQFRSSLQSSRGLNGFETPQRESRHREMDIVSIKNECIARMGKLNRGLLQDVGLVNSGKVAGTLLFSQASRSTYLEVEKGRKGGQNYVIGKMLHSSKELLDILKQLERCKSTLFPPGHTERTTSTADEVTTAMTETTTLNQTGSHAPSSPLGGNPLPPLSGPLSASASHSSSCASSSSASASTSGASLLSSSTSAPSTSPAISLQLDTTLTLLFLTGYTSVIQLYEGVFSFIRDSVAANPSGSNFLPTLPKLQVDGFEVGSSTRDLQICILLQVSTHILNQIEERLHAIRDRAEGHVPAALLDTILDRSDPSQRGAKGRELCRIVRDIKEHLKHYAE.

The segment at residues Cys19–Cys51 is a DNA-binding region (zn(2)-C6 fungal-type). 3 disordered regions span residues Pro111–Arg133, Ser242–His262, and Leu376–Ala404.

The protein resides in the nucleus. In terms of biological role, transcription factor that positively regulates the expression of the gene cluster that mediates the biosynthesis of oxaleimides, cytotoxic compounds containing an unusual disubstituted succinimide moiety. This chain is C6 finger transcription factor poxB, found in Penicillium oxalicum.